A 366-amino-acid polypeptide reads, in one-letter code: tRNA/tmRNA (uracil-C(5))-methyltransferase (366 aa).

5 residues coordinate S-adenosyl-L-methionine: Q190, Y218, N223, E239, and D299. C324 (nucleophile) is an active-site residue. The Proton acceptor role is filled by E358.

Belongs to the class I-like SAM-binding methyltransferase superfamily. RNA M5U methyltransferase family. TrmA subfamily.

It catalyses the reaction uridine(54) in tRNA + S-adenosyl-L-methionine = 5-methyluridine(54) in tRNA + S-adenosyl-L-homocysteine + H(+). The catalysed reaction is uridine(341) in tmRNA + S-adenosyl-L-methionine = 5-methyluridine(341) in tmRNA + S-adenosyl-L-homocysteine + H(+). In terms of biological role, dual-specificity methyltransferase that catalyzes the formation of 5-methyluridine at position 54 (m5U54) in all tRNAs, and that of position 341 (m5U341) in tmRNA (transfer-mRNA). The chain is tRNA/tmRNA (uracil-C(5))-methyltransferase from Enterobacter sp. (strain 638).